The following is a 706-amino-acid chain: Polyribonucleotide nucleotidyltransferase (706 aa).

Mg(2+)-binding residues include aspartate 487 and aspartate 493. A KH domain is found at 553–612; that stretch reads PRLFTMKISQDKIRDVIGKGGETIRSITAETGTEINIAEDGTITIAATTQEAGDAAKKRI. The S1 motif domain maps to 622–692; that stretch reads GKVYEGTVVK…DRGRVRLSIK (71 aa).

This sequence belongs to the polyribonucleotide nucleotidyltransferase family. The cofactor is Mg(2+).

Its subcellular location is the cytoplasm. It carries out the reaction RNA(n+1) + phosphate = RNA(n) + a ribonucleoside 5'-diphosphate. Involved in mRNA degradation. Catalyzes the phosphorolysis of single-stranded polyribonucleotides processively in the 3'- to 5'-direction. In Neisseria gonorrhoeae (strain ATCC 700825 / FA 1090), this protein is Polyribonucleotide nucleotidyltransferase.